The chain runs to 175 residues: uncharacterized protein (175 aa).

Topologically, residues 1-2 (ME) are extracellular. Residues 3–23 (SIILSIAIFIGVLLGTSVGAG) form a helical membrane-spanning segment. At 24-151 (SGSSISPDVD…TGISTTMNAR (128 aa)) the chain is on the cytoplasmic side. The disordered stretch occupies residues 26-88 (SSISPDVDAG…DVGAGSGSSI (63 aa)). Positions 59–78 (FSGSSTSPDVDAGSGSSTSP) are enriched in polar residues. Residues 152–172 (VAVLITAAILSAPVTAIALLE) form a helical membrane-spanning segment. The Extracellular portion of the chain corresponds to 173 to 175 (ARR).

It is found in the membrane. This is an uncharacterized protein from Saccharomyces cerevisiae (strain ATCC 204508 / S288c) (Baker's yeast).